The sequence spans 285 residues: Iodotyrosine deiodinase 1 (285 aa).

The helical transmembrane segment at 1-21 threads the bilayer; the sequence is MFLLTPVLVAVVCILVIWVFK. Residues 96 to 100 and 124 to 125 each bind FMN; these read RRSIR and SG. The 3,5-diiodo-L-tyrosine site is built by Ala-126, Glu-153, Tyr-157, and Lys-178. The 3-iodo-L-tyrosine site is built by Ala-126, Glu-153, Tyr-157, and Lys-178. Residues 233 to 235 and Arg-275 contribute to the FMN site; that span reads TTT.

It belongs to the nitroreductase family. Homodimer. It depends on FMN as a cofactor.

It localises to the cell membrane. The protein localises to the cytoplasmic vesicle membrane. The enzyme catalyses 2 iodide + L-tyrosine + 2 NADP(+) = 3,5-diiodo-L-tyrosine + 2 NADPH + H(+). It carries out the reaction iodide + L-tyrosine + NADP(+) = 3-iodo-L-tyrosine + NADPH. It catalyses the reaction 3-iodo-L-tyrosine + iodide + NADP(+) = 3,5-diiodo-L-tyrosine + NADPH + H(+). The catalysed reaction is L-tyrosine + chloride + NADP(+) = 3-chloro-L-tyrosine + NADPH. The enzyme catalyses bromide + L-tyrosine + NADP(+) = 3-bromo-L-tyrosine + NADPH. Catalyzes the dehalogenation of halotyrosines such as 3-bromo-L-tyrosine, 3-chloro-L-tyrosine, 3-iodo-L-tyrosine and 3,5-diiodo-L-tyrosine. During thyroid hormone biosynthesis, facilitates iodide salvage by catalysing the oxidative NADPH-dependent deiodination of the halogenated by-products of thyroid hormone production, monoiodotyrosine (L-MIT) and diiodotyrosine (L-DIT). The scavanged iodide can then reenter the hormone-producing pathways. Acts more efficiently on 3-iodo-L-tyrosine than 3,5-diiodo-L-tyrosine. This is Iodotyrosine deiodinase 1 (Iyd) from Rattus norvegicus (Rat).